A 369-amino-acid chain; its full sequence is Coiled-coil domain-containing protein 130 homolog (369 aa).

Positions 233–263 are enriched in basic and acidic residues; sequence TRYRDTKTHDDHLESSRDRIESRRIFRRPEE. Residues 233–369 are disordered; the sequence is TRYRDTKTHD…EYGNSSDDSD (137 aa). The segment covering 266–282 has biased composition (low complexity); it reads TPSTSSGSSGGAVPSAS. Basic and acidic residues predominate over residues 283–297; that stretch reads ERLKATMKAERDKRI. Over residues 299 to 310 the composition is skewed to low complexity; sequence ASFSTAGTSSAT.

It belongs to the CWC16 family.

This is Coiled-coil domain-containing protein 130 homolog from Caenorhabditis elegans.